The chain runs to 119 residues: Ribonuclease P protein component (119 aa).

The protein belongs to the RnpA family. In terms of assembly, consists of a catalytic RNA component (M1 or rnpB) and a protein subunit.

The enzyme catalyses Endonucleolytic cleavage of RNA, removing 5'-extranucleotides from tRNA precursor.. Its function is as follows. RNaseP catalyzes the removal of the 5'-leader sequence from pre-tRNA to produce the mature 5'-terminus. It can also cleave other RNA substrates such as 4.5S RNA. The protein component plays an auxiliary but essential role in vivo by binding to the 5'-leader sequence and broadening the substrate specificity of the ribozyme. This is Ribonuclease P protein component from Mycolicibacterium paratuberculosis (strain ATCC BAA-968 / K-10) (Mycobacterium paratuberculosis).